A 775-amino-acid polypeptide reads, in one-letter code: Zinc finger protein GLIS3 (775 aa).

Disordered stretches follow at residues 121–147 and 282–314; these read TESS…KKRA and PGST…AHLH. Low complexity predominate over residues 123–133; sequence SSHSPYPSPRH. Over residues 134–147 the composition is skewed to basic residues; it reads SSTRSHSARSKKRA. Pro residues predominate over residues 289–307; that stretch reads PPAPPLPPLPPPPGPPPPY. Residues 345–370 form a C2H2-type 1 zinc finger; sequence HCCRWIDCSALYDQQEELVRHIEKVH. Residues 379-406 form a C2H2-type 2; atypical zinc finger; the sequence is FTCFWAGCPRRYKPFNARYKLLIHMRVH. 3 C2H2-type zinc fingers span residues 412-436, 442-466, and 472-496; these read NKCT…LRSH, YLCQ…QRTH, and YACQ…VKAH. Disordered regions lie at residues 485–512 and 529–665; these read DPSS…SSTE and PATS…QPNG. The Bipartite nuclear localization signal signature appears at 491–507; sequence KHVKAHSSKEQQARKKL. Positions 497 to 512 are enriched in basic and acidic residues; it reads SSKEQQARKKLRSSTE. 3 stretches are compositionally biased toward polar residues: residues 557–567, 588–600, and 632–663; these read IFSSNYSSRSG, VQGS…SQLP, and SILQ…SFQP.

Belongs to the GLI C2H2-type zinc-finger protein family. As to expression, in the adult, expressed at high levels in the kidney and at lower levels in the brain, skeletal muscle, pancreas, liver, lung, thymus and ovary.

Its subcellular location is the nucleus. Functionally, acts both as a repressor and an activator of transcription. Binds to the consensus sequence 5'-GACCACCCAC-3'. The polypeptide is Zinc finger protein GLIS3 (GLIS3) (Homo sapiens (Human)).